The sequence spans 124 residues: uncharacterized protein (124 aa).

Positions 1-18 (MHIIKTLISVGVAFSLSA) are cleaved as a signal peptide. Residue C19 is the site of N-palmitoyl cysteine attachment. A lipid anchor (S-diacylglycerol cysteine) is attached at C19.

Its subcellular location is the cell membrane. This is an uncharacterized protein from Pasteurella multocida (strain Pm70).